Reading from the N-terminus, the 129-residue chain is MSYKFPDNLNYADTHEYVLEENGLLKIGVSEFAIDQLGDIVFVELADEGATLEKGETFGTIESVKAVEEVYLPFSGEIVSVNESVIENPELLQSDPIGDGWLVILKPESKASIADLMTSEEYQSKVVPK.

In terms of domain architecture, Lipoyl-binding spans 24 to 106; that stretch reads LLKIGVSEFA…IGDGWLVILK (83 aa). At Lys65 the chain carries N6-lipoyllysine.

This sequence belongs to the GcvH family. As to quaternary structure, the glycine cleavage system is composed of four proteins: P, T, L and H. (R)-lipoate serves as cofactor.

Functionally, the glycine cleavage system catalyzes the degradation of glycine. The H protein shuttles the methylamine group of glycine from the P protein to the T protein. The polypeptide is Glycine cleavage system H protein (Prochlorococcus marinus (strain MIT 9301)).